A 585-amino-acid chain; its full sequence is RNA polymerase sigma factor RpoD (585 aa).

The tract at residues 67–93 (PASTLVPKDDSKPARKKKESSASTSGS) is disordered. A sigma-70 factor domain-2 region spans residues 351–421 (LVKANLRLVV…TRAISDQART (71 aa)). Residues 375–378 (DLIQ) carry the Interaction with polymerase core subunit RpoC motif. The tract at residues 430-506 (EQVNKVIRET…DTEVETPVNA (77 aa)) is sigma-70 factor domain-3. The segment at 519-572 (VLHTLPAREQKVIRMRFGLDDGYPQTLEEVGYQFKVTRERIRQIEAKALRRLRH) is sigma-70 factor domain-4. A DNA-binding region (H-T-H motif) is located at residues 545-564 (LEEVGYQFKVTRERIRQIEA).

The protein belongs to the sigma-70 factor family. RpoD/SigA subfamily. As to quaternary structure, interacts transiently with the RNA polymerase catalytic core.

The protein localises to the cytoplasm. Its function is as follows. Sigma factors are initiation factors that promote the attachment of RNA polymerase to specific initiation sites and are then released. This sigma factor is the primary sigma factor during exponential growth. The sequence is that of RNA polymerase sigma factor RpoD from Leptospira interrogans serogroup Icterohaemorrhagiae serovar copenhageni (strain Fiocruz L1-130).